Reading from the N-terminus, the 312-residue chain is DnaJ homolog subfamily B member 7 (312 aa).

The J domain occupies 3–69 (DYYEVLGVQR…EKRDIYDKYG (67 aa)). Residues 272–312 (SWVTNKKEPSIFSAGFKEGGRRKKKKHKEGQKKKKSNKRNH) form a disordered region. Basic residues predominate over residues 291 to 312 (GRRKKKKHKEGQKKKKSNKRNH).

Its function is as follows. Probably acts as a co-chaperone. The chain is DnaJ homolog subfamily B member 7 (Dnajb7) from Mus musculus (Mouse).